The chain runs to 332 residues: 30 kDa heat shock protein (332 aa).

The Extracellular segment spans residues 1–34 (MNDTLSSFLNRNEALGLNPPHGLDMHITKRGSDW). A helical membrane pass occupies residues 35-55 (LWAVFAVFGFILLCYVVMFFI). Residues 56–65 (AENKGSRLTR) lie on the Cytoplasmic side of the membrane. The chain crosses the membrane as a helical span at residues 66–86 (YALAPAFLITFFEFFAFFTYA). The Extracellular segment spans residues 87-121 (SDLGWTGVQAEFNHVKVSKSITGEVPGIRQIFYSK). The chain crosses the membrane as a helical span at residues 122–142 (YIAWFLSWPCLLFLIELAAST). At 143-157 (TGENDDISALDMVHS) the chain is on the cytoplasmic side. The chain crosses the membrane as a helical span at residues 158–178 (LLIQIVGTLFWVVSLLVGSLI). At 179–181 (KST) the chain is on the extracellular side. The helical transmembrane segment at 182 to 202 (YKWGYYTIGAVAMLVTQGVIC) threads the bilayer. Residues 203–215 (QRQFFNLKTRGFN) lie on the Cytoplasmic side of the membrane. Residues 216-236 (ALMLCTCMVIVWLYFICWGLS) form a helical membrane-spanning segment. Over 237-248 (DGGNRIQPDGEA) the chain is Extracellular. A helical membrane pass occupies residues 249–269 (IFYGVLDLCVFAIYPCYLLIA). Topologically, residues 270 to 332 (VSRDGKLPRL…EAEQAVEDTA (63 aa)) are cytoplasmic. Residues 290–332 (ATDDVEDAAPETKEAVPESPRASGETAIHEPEPEAEQAVEDTA) are disordered. Ser-308 bears the Phosphoserine mark. Over residues 322 to 332 (PEAEQAVEDTA) the composition is skewed to acidic residues. A Phosphothreonine modification is found at Thr-331.

It belongs to the archaeal/bacterial/fungal opsin family.

Its subcellular location is the membrane. Functionally, probably cooperates with other heat shock proteins in the translocation of polypeptides through membranes. It may counteract the altering effect of heat shock on the plasma membrane. The protein is 30 kDa heat shock protein (HSP30) of Saccharomyces cerevisiae (strain ATCC 204508 / S288c) (Baker's yeast).